We begin with the raw amino-acid sequence, 294 residues long: 4-hydroxy-tetrahydrodipicolinate synthase (294 aa).

Threonine 44 serves as a coordination point for pyruvate. Residue tyrosine 132 is the Proton donor/acceptor of the active site. The Schiff-base intermediate with substrate role is filled by lysine 160. Residue valine 202 participates in pyruvate binding.

This sequence belongs to the DapA family. As to quaternary structure, homotetramer; dimer of dimers.

The protein localises to the cytoplasm. The enzyme catalyses L-aspartate 4-semialdehyde + pyruvate = (2S,4S)-4-hydroxy-2,3,4,5-tetrahydrodipicolinate + H2O + H(+). The protein operates within amino-acid biosynthesis; L-lysine biosynthesis via DAP pathway; (S)-tetrahydrodipicolinate from L-aspartate: step 3/4. Its function is as follows. Catalyzes the condensation of (S)-aspartate-beta-semialdehyde [(S)-ASA] and pyruvate to 4-hydroxy-tetrahydrodipicolinate (HTPA). The protein is 4-hydroxy-tetrahydrodipicolinate synthase of Leptospira biflexa serovar Patoc (strain Patoc 1 / Ames).